Here is a 166-residue protein sequence, read N- to C-terminus: Ribosome maturation factor RimM (166 aa).

A PRC barrel domain is found at 92-164 (EGVYYDFQLI…KIIIDPIPGL (73 aa)).

Belongs to the RimM family. In terms of assembly, binds ribosomal protein uS19.

The protein resides in the cytoplasm. An accessory protein needed during the final step in the assembly of 30S ribosomal subunit, possibly for assembly of the head region. Essential for efficient processing of 16S rRNA. May be needed both before and after RbfA during the maturation of 16S rRNA. It has affinity for free ribosomal 30S subunits but not for 70S ribosomes. In Dehalococcoides mccartyi (strain CBDB1), this protein is Ribosome maturation factor RimM.